Here is a 450-residue protein sequence, read N- to C-terminus: Equilibrative nucleotide transporter 1 (450 aa).

11 helical membrane-spanning segments follow: residues 63–83 (FAYI…NAFI), 101–121 (IFAV…VVFY), 133–153 (LGLL…LVYV), 168–188 (AAVA…IGVA), 196–216 (MQAV…LRIL), 234–254 (LYFA…NVAH), 300–320 (HGFG…GYIT), 334–354 (ILLI…TAVF), 361–381 (IAVG…GCLH), 394–414 (ILTC…MILA), and 430–450 (TVMF…FWVI).

It belongs to the SLC29A/ENT transporter (TC 2.A.57) family. As to expression, in young seedlings, expressed in root elongation zone, root cortex, root-hair, at the transition to the shoot and cotyledons. Expressed in hydathodes of fully developed leaves and pollen.

The protein resides in the vacuole membrane. Its function is as follows. Nucleoside transporter involved in adenosine transport and required for nucleotide metabolism which influences growth and pollen germination. Has high affinity for adenosine when expressed in a heterologous system (yeast). This is Equilibrative nucleotide transporter 1 (ENT1) from Arabidopsis thaliana (Mouse-ear cress).